The sequence spans 1135 residues: Integrin alpha-7 (1135 aa).

A signal peptide spans Met1–Ala33. Topologically, residues Phe34–Trp1036 are extracellular. FG-GAP repeat units lie at residues Val38–Cys103, Arg110–Val165, Glu185–Gln238, Asp248–Leu305, Ile306–Asp367, Ile368–Thr423, and Gln427–Arg486. Asn86 carries N-linked (GlcNAc...) asparagine glycosylation. 3 disulfides stabilise this stretch: Cys94/Cys103, Cys140/Cys163, and Cys184/Cys197. Ca(2+) contacts are provided by Asp328, Asn330, Asp332, Asp336, Asp390, Asn392, Asp394, Asp398, Asp448, Asp450, Asn452, Tyr454, and Asp456. Cystine bridges form between Cys495–Cys502, Cys508–Cys571, Cys637–Cys643, Cys736–Cys747, Cys894–Cys948, and Cys955–Cys960. Asn741 is a glycosylation site (N-linked (GlcNAc...) asparagine). Basic and acidic residues predominate over residues Val905–Gly916. The interval Val905–Trp933 is disordered. N-linked (GlcNAc...) asparagine glycosylation occurs at Asn943. 2 N-linked (GlcNAc...) asparagine glycosylation sites follow: Asn979 and Asn999. Residues Trp1037 to Leu1057 traverse the membrane as a helical segment. Residues Trp1058–Ala1135 lie on the Cytoplasmic side of the membrane. The GFFKR motif signature appears at Gly1061–Arg1065. A run of 3 repeats spans residues Asp1111–Pro1114, Asp1119–Pro1122, and Asp1127–Pro1130. The tract at residues Asp1111–Pro1130 is 3 X 4 AA repeats of D-X-H-P.

Belongs to the integrin alpha chain family. In terms of assembly, interacts (via C-terminus intracellular tail region) with CIB1; the interaction is stabilized/increased in a calcium- and magnesium-dependent manner. Heterodimer of an alpha and a beta subunit. The alpha subunit is composed of a heavy and a light chain linked by a disulfide bond. Alpha-7 associates with beta-1. Interacts with COMP. Post-translationally, ADP-ribosylated on at least two sites of the extracellular domain in skeletal myotubes. A 70 kDa form is created by proteolytic cleavage. Cleavage is elevated during myogenic differentiation and the cleaved form enhances cell adhesion and spreading on laminin. As to expression, expressed in skeletal and cardiac muscle. Expressed in replicating myoblasts. In differentiated muscle fibers localizes between fibers and the surrounding matrix. Isoform Alpha-7X1A and isoform Alpha-7X1B are expressed at myotendinous and neuromuscular junctions; isoform Alpha-7X1C is expressed at neuromuscular junctions and at extrasynaptic sites.

It localises to the membrane. Functionally, integrin alpha-7/beta-1 is the primary laminin receptor on skeletal myoblasts and adult myofibers. During myogenic differentiation, it may induce changes in the shape and mobility of myoblasts, and facilitate their localization at laminin-rich sites of secondary fiber formation. Involved in the maintenance of the myofibers cytoarchitecture as well as for their anchorage, viability and functional integrity. Required to promote contractile phenotype acquisition in differentiated airway smooth muscle (ASM) cells. Acts as a Schwann cell receptor for laminin-2. Acts as a receptor of COMP and mediates its effect on vascular smooth muscle cells (VSMCs) maturation. In Rattus norvegicus (Rat), this protein is Integrin alpha-7 (Itga7).